The chain runs to 338 residues: Glyceraldehyde-3-phosphate dehydrogenase 2 (338 aa).

NAD(+)-binding positions include 13 to 14, D35, and R80; that span reads RI. Residues 151 to 153, T182, 211 to 212, and R234 contribute to the D-glyceraldehyde 3-phosphate site; these read SCT and TG. The active-site Nucleophile is the C152. Residue N316 coordinates NAD(+).

This sequence belongs to the glyceraldehyde-3-phosphate dehydrogenase family. Homotetramer.

The protein resides in the cytoplasm. The enzyme catalyses D-glyceraldehyde 3-phosphate + phosphate + NAD(+) = (2R)-3-phospho-glyceroyl phosphate + NADH + H(+). The protein operates within carbohydrate degradation; glycolysis; pyruvate from D-glyceraldehyde 3-phosphate: step 1/5. Inhibited by koningic acid through the interaction of cysteine residues with koningic acid even at very low concentrations. The sequence is that of Glyceraldehyde-3-phosphate dehydrogenase 2 (gpd2) from Trichoderma koningii (Hypocrea koningii).